The chain runs to 159 residues: Ribosomal RNA large subunit methyltransferase H (159 aa).

S-adenosyl-L-methionine contacts are provided by residues leucine 76, glycine 108, and 127–132 (FSKMTF).

The protein belongs to the RNA methyltransferase RlmH family. Homodimer.

Its subcellular location is the cytoplasm. The catalysed reaction is pseudouridine(1915) in 23S rRNA + S-adenosyl-L-methionine = N(3)-methylpseudouridine(1915) in 23S rRNA + S-adenosyl-L-homocysteine + H(+). In terms of biological role, specifically methylates the pseudouridine at position 1915 (m3Psi1915) in 23S rRNA. In Oceanobacillus iheyensis (strain DSM 14371 / CIP 107618 / JCM 11309 / KCTC 3954 / HTE831), this protein is Ribosomal RNA large subunit methyltransferase H.